A 303-amino-acid chain; its full sequence is Uracil phosphoribosyltransferase (303 aa).

A unknown region spans residues Met1 to Ser86. The interval Leu87–Ser303 is UPRTase. 5-phospho-alpha-D-ribose 1-diphosphate-binding positions include Arg170, Arg195, and Asp222–Ser230. Uracil-binding positions include Ile285 and Gly290–Ala292. 5-phospho-alpha-D-ribose 1-diphosphate is bound at residue Asp291.

It belongs to the UPRTase family. Mg(2+) serves as cofactor.

It catalyses the reaction UMP + diphosphate = 5-phospho-alpha-D-ribose 1-diphosphate + uracil. It functions in the pathway pyrimidine metabolism; UMP biosynthesis via salvage pathway; UMP from uracil: step 1/1. Its activity is regulated as follows. Allosterically activated by GTP. In terms of biological role, catalyzes the conversion of uracil and 5-phospho-alpha-D-ribose 1-diphosphate (PRPP) to UMP and diphosphate. The sequence is that of Uracil phosphoribosyltransferase (upp) from Chlamydia muridarum (strain MoPn / Nigg).